A 492-amino-acid chain; its full sequence is Ketol-acid reductoisomerase (NADP(+)) (492 aa).

The KARI N-terminal Rossmann domain maps to 15–208 (AQLGKCRFMA…GGHRAGVLES (194 aa)). NADP(+) is bound by residues 45-48 (CGAQ), R68, R76, S78, and 108-110 (DKQ). H132 is an active-site residue. G158 is a binding site for NADP(+). 2 KARI C-terminal knotted domains span residues 209-344 (SFVA…NAPQ) and 345-485 (FEGK…MTDM). Positions 217, 221, 389, and 393 each coordinate Mg(2+). S414 is a binding site for substrate.

Belongs to the ketol-acid reductoisomerase family. It depends on Mg(2+) as a cofactor.

It carries out the reaction (2R)-2,3-dihydroxy-3-methylbutanoate + NADP(+) = (2S)-2-acetolactate + NADPH + H(+). The catalysed reaction is (2R,3R)-2,3-dihydroxy-3-methylpentanoate + NADP(+) = (S)-2-ethyl-2-hydroxy-3-oxobutanoate + NADPH + H(+). It participates in amino-acid biosynthesis; L-isoleucine biosynthesis; L-isoleucine from 2-oxobutanoate: step 2/4. The protein operates within amino-acid biosynthesis; L-valine biosynthesis; L-valine from pyruvate: step 2/4. Its function is as follows. Involved in the biosynthesis of branched-chain amino acids (BCAA). Catalyzes an alkyl-migration followed by a ketol-acid reduction of (S)-2-acetolactate (S2AL) to yield (R)-2,3-dihydroxy-isovalerate. In the isomerase reaction, S2AL is rearranged via a Mg-dependent methyl migration to produce 3-hydroxy-3-methyl-2-ketobutyrate (HMKB). In the reductase reaction, this 2-ketoacid undergoes a metal-dependent reduction by NADPH to yield (R)-2,3-dihydroxy-isovalerate. In Yersinia enterocolitica serotype O:8 / biotype 1B (strain NCTC 13174 / 8081), this protein is Ketol-acid reductoisomerase (NADP(+)).